A 360-amino-acid polypeptide reads, in one-letter code: Peptide chain release factor 1 (360 aa).

At Gln-233 the chain carries N5-methylglutamine. A disordered region spans residues 283–305 (KLDAERAADRRSQVGSGDRSERI).

It belongs to the prokaryotic/mitochondrial release factor family. In terms of processing, methylated by PrmC. Methylation increases the termination efficiency of RF1.

The protein localises to the cytoplasm. Functionally, peptide chain release factor 1 directs the termination of translation in response to the peptide chain termination codons UAG and UAA. This chain is Peptide chain release factor 1, found in Methylocella silvestris (strain DSM 15510 / CIP 108128 / LMG 27833 / NCIMB 13906 / BL2).